Here is an 898-residue protein sequence, read N- to C-terminus: Phosphoenolpyruvate carboxylase (898 aa).

Active-site residues include His138 and Lys561.

This sequence belongs to the PEPCase type 1 family. Mg(2+) serves as cofactor.

It carries out the reaction oxaloacetate + phosphate = phosphoenolpyruvate + hydrogencarbonate. Its function is as follows. Forms oxaloacetate, a four-carbon dicarboxylic acid source for the tricarboxylic acid cycle. The protein is Phosphoenolpyruvate carboxylase of Streptococcus pneumoniae serotype 2 (strain D39 / NCTC 7466).